A 434-amino-acid polypeptide reads, in one-letter code: MAAPLALVLVVAVTVRAALFRSSLAEFISERVEVVSPLSSWKRVVEGLALLDLGVSPYSGAVFHETPLIIYLFHFLIDYAELVFMITDALTAIALYFAIQDFNKVVFKKQKLLLELDQYAPDVAELIRTPMEMRYIPLKVALYLLNPYTILSCVAKSTCAINNTLIAFFILTTIKGSVFLSAVFLALATYQSLYPVTLFAPGLLYLLQRQYIPVKVKSKAFWIFSWEYAMMYTGSLVVIVCLSFFLLSSWDFIPAVYGFILSVPDLTPNIGLFWYFFAEMFEHFSLFFVCVFQINVFFYTVPLAIKLKEHPIFFMFIQIAIISIFKSYPTVGDVALYMAFFPVWNHLYRFLRNIFVLTCIIIVCSLLFPVLWHLWIYAGSANSNFFYAITLTFNVGQILLISDYFYAFLRREYYLTHGLYLTAKDGTEAMLVLK.

The Cytoplasmic segment spans residues 1–3; that stretch reads MAA. Residues 4–22 form a helical membrane-spanning segment; the sequence is PLALVLVVAVTVRAALFRS. Over 23–78 the chain is Lumenal; it reads SLAEFISERVEVVSPLSSWKRVVEGLALLDLGVSPYSGAVFHETPLIIYLFHFLID. The helical transmembrane segment at 79-99 threads the bilayer; that stretch reads YAELVFMITDALTAIALYFAI. Over 100-136 the chain is Cytoplasmic; that stretch reads QDFNKVVFKKQKLLLELDQYAPDVAELIRTPMEMRYI. The next 4 helical transmembrane spans lie at 137–157, 158–177, 178–193, and 194–204; these read PLKVALYLLNPYTILSCVAKS, TCAINNTLIAFFILTTIKGS, VFLSAVFLALATYQSL, and YPVTLFAPGLL. At 205 to 221 the chain is on the cytoplasmic side; that stretch reads YLLQRQYIPVKVKSKAF. Lysine 215 contributes to the a cardiolipin binding site. A helical membrane pass occupies residues 222 to 243; that stretch reads WIFSWEYAMMYTGSLVVIVCLS. The Lumenal segment spans residues 244–285; the sequence is FFLLSSWDFIPAVYGFILSVPDLTPNIGLFWYFFAEMFEHFS. The chain crosses the membrane as a helical span at residues 286 to 305; it reads LFFVCVFQINVFFYTVPLAI. Topologically, residues 306 to 310 are cytoplasmic; the sequence is KLKEH. Residue lysine 308 coordinates a cardiolipin. 2 helical membrane-spanning segments follow: residues 311-330 and 331-344; these read PIFFMFIQIAIISIFKSYPT and VGDVALYMAFFPVW. The Cytoplasmic portion of the chain corresponds to 345–353; it reads NHLYRFLRN. Residues 354 to 371 form a helical membrane-spanning segment; that stretch reads IFVLTCIIIVCSLLFPVL. Topologically, residues 372 to 383 are lumenal; it reads WHLWIYAGSANS. A 2-acyl-6-[6-phosphoethanolamine-alpha-D-mannosyl-(1-&gt;2)-6-phosphoethanolamine-alpha-D-mannosyl-(1-&gt;6)-2-phosphoethanolamine-alpha-D-mannosyl-(1-&gt;4)-alpha-D-glucosaminyl]-1-(1-radyl,2-acyl-sn-glycero-3-phospho)-1D-myo-inositol-binding residues include asparagine 382 and asparagine 384. A helical transmembrane segment spans residues 384–405; that stretch reads NFFYAITLTFNVGQILLISDYF. At 406-434 the chain is on the cytoplasmic side; that stretch reads YAFLRREYYLTHGLYLTAKDGTEAMLVLK.

The protein belongs to the PIGU family. As to quaternary structure, heteropentamer. Part of the GPI-anchor transamidase complex, consisting of PIGK, PIGT, PIGS, PIGU and GAA1.

It is found in the endoplasmic reticulum membrane. The protein operates within glycolipid biosynthesis; glycosylphosphatidylinositol-anchor biosynthesis. Its function is as follows. Component of the glycosylphosphatidylinositol-anchor (GPI-anchor) transamidase (GPI-T) complex that catalyzes the formation of the linkage between a proprotein and a GPI-anchor and participates in GPI anchored protein biosynthesis. Binds the lipid portion of GPI-anchor. May act as an organizer in the transmembrane layer to recruit other subunits, and thus is essential for assembly of the complex. The chain is GPI-anchor transamidase component PIGU from Mus musculus (Mouse).